The sequence spans 278 residues: Ribosomal protein L11 methyltransferase (278 aa).

S-adenosyl-L-methionine-binding residues include Thr-131, Gly-152, Asp-173, and Asn-214.

This sequence belongs to the methyltransferase superfamily. PrmA family.

The protein resides in the cytoplasm. It catalyses the reaction L-lysyl-[protein] + 3 S-adenosyl-L-methionine = N(6),N(6),N(6)-trimethyl-L-lysyl-[protein] + 3 S-adenosyl-L-homocysteine + 3 H(+). In terms of biological role, methylates ribosomal protein L11. This chain is Ribosomal protein L11 methyltransferase, found in Campylobacter lari (strain RM2100 / D67 / ATCC BAA-1060).